Consider the following 147-residue polypeptide: MATLLVLHGPNLNLLGTREPGTYGSTTLGQINQDLERRAREAGHHLLHLQSNAEYELIDRIHAARDEGVDFIIINPAAFTHTSVALRDALLAVSIPFIEVHLSNVHKREPFRHHSYFSDVAVGVICGLGATGYRLALESALEQLQRP.

The Proton acceptor role is filled by Y23. Residues N75, H81, and D88 each coordinate substrate. Residue H101 is the Proton donor of the active site. Residues 102-103 and R112 contribute to the substrate site; that span reads LS.

Belongs to the type-II 3-dehydroquinase family. In terms of assembly, homododecamer.

The enzyme catalyses 3-dehydroquinate = 3-dehydroshikimate + H2O. Its pathway is metabolic intermediate biosynthesis; chorismate biosynthesis; chorismate from D-erythrose 4-phosphate and phosphoenolpyruvate: step 3/7. Catalyzes a trans-dehydration via an enolate intermediate. The protein is 3-dehydroquinate dehydratase 1 (aroQ1) of Pseudomonas aeruginosa (strain ATCC 15692 / DSM 22644 / CIP 104116 / JCM 14847 / LMG 12228 / 1C / PRS 101 / PAO1).